The primary structure comprises 508 residues: Protection of telomeres protein tpz1 (508 aa).

Residues 2–223 (SNCLKHPWLE…ENTTHGIYLE (222 aa)) are pot1-binding. 3 disordered regions span residues 159-178 (QEAS…NSRD), 235-269 (VSET…PSLP), and 282-358 (PPPF…QSHR). Residues 327–347 (STEQLNSSLTIERSQSIQSTD) show a composition bias toward polar residues. The span at 348–358 (SKQRVETQSHR) shows a compositional bias: basic and acidic residues. The interval 379–508 (TIDDSTGKLL…KKIEEFRNKS (130 aa)) is ccq1/poz1-binding.

As to quaternary structure, interacts with ccq1, pot1 and poz1.

The protein localises to the chromosome. It is found in the telomere. Its subcellular location is the nucleus. In terms of biological role, telomeric DNA-binding protein that is required to protect the 3'-end telomeric overhang and involved in telomere length regulation. recruits poz1 and ccq1 to telomeres, regulating telomere length negatively and positively respectively. In Schizosaccharomyces pombe (strain 972 / ATCC 24843) (Fission yeast), this protein is Protection of telomeres protein tpz1 (tpz1).